The primary structure comprises 212 residues: Protein-L-isoaspartate O-methyltransferase (212 aa).

Residue Ser-56 is part of the active site.

This sequence belongs to the methyltransferase superfamily. L-isoaspartyl/D-aspartyl protein methyltransferase family.

Its subcellular location is the cytoplasm. The catalysed reaction is [protein]-L-isoaspartate + S-adenosyl-L-methionine = [protein]-L-isoaspartate alpha-methyl ester + S-adenosyl-L-homocysteine. Functionally, catalyzes the methyl esterification of L-isoaspartyl residues in peptides and proteins that result from spontaneous decomposition of normal L-aspartyl and L-asparaginyl residues. It plays a role in the repair and/or degradation of damaged proteins. In Myxococcus xanthus (strain DK1622), this protein is Protein-L-isoaspartate O-methyltransferase.